A 265-amino-acid chain; its full sequence is NAD kinase 1 (265 aa).

D45 (proton acceptor) is an active-site residue. Residues 45 to 46 (DG), H50, 122 to 123 (NE), R148, D150, and A185 contribute to the NAD(+) site.

The protein belongs to the NAD kinase family. A divalent metal cation serves as cofactor.

The protein localises to the cytoplasm. The enzyme catalyses NAD(+) + ATP = ADP + NADP(+) + H(+). In terms of biological role, involved in the regulation of the intracellular balance of NAD and NADP, and is a key enzyme in the biosynthesis of NADP. Catalyzes specifically the phosphorylation on 2'-hydroxyl of the adenosine moiety of NAD to yield NADP. The polypeptide is NAD kinase 1 (Halalkalibacterium halodurans (strain ATCC BAA-125 / DSM 18197 / FERM 7344 / JCM 9153 / C-125) (Bacillus halodurans)).